The primary structure comprises 415 residues: rRNA methyltransferase 3, mitochondrial (415 aa).

A mitochondrion-targeting transit peptide spans 1 to 47 (MAALCRGTVRACILKPLGLSVSLQVKRNVRALRRTPVRVLPAAEKGR). The segment at 41-73 (PAAEKGRERKEVEARRPQQPRQSEYQTRTSQGV) is disordered. Over residues 44–56 (EKGRERKEVEARR) the composition is skewed to basic and acidic residues. The segment covering 59–73 (QPRQSEYQTRTSQGV) has biased composition (polar residues). Positions 357, 381, and 390 each coordinate S-adenosyl-L-methionine.

It belongs to the class IV-like SAM-binding methyltransferase superfamily. RNA methyltransferase TrmH family.

It localises to the mitochondrion. It carries out the reaction a uridine in rRNA + S-adenosyl-L-methionine = a 2'-O-methyluridine in rRNA + S-adenosyl-L-homocysteine + H(+). Its function is as follows. S-adenosyl-L-methionine-dependent 2'-O-ribose methyltransferase that catalyzes the formation of 2'-O-methylguanosine at position 1370 (Gm1370) in the mitochondrial large subunit ribosomal RNA (mtLSU rRNA), a conserved modification in the peptidyl transferase domain of the mtLSU rRNA. Also required for formation of 2'-O-methyluridine at position 1369 (Um1369) mediated by MRM2. This chain is rRNA methyltransferase 3, mitochondrial, found in Xenopus tropicalis (Western clawed frog).